The primary structure comprises 256 residues: 5-keto-4-deoxy-D-glucarate aldolase (256 aa).

Catalysis depends on His50, which acts as the Proton acceptor. Gln151 provides a ligand contact to substrate. Glu153 contacts Mg(2+). Residues Ser178 and Asp179 each contribute to the substrate site. Mg(2+) is bound at residue Asp179.

The protein belongs to the HpcH/HpaI aldolase family. KDGluc aldolase subfamily. As to quaternary structure, homohexamer; trimer of dimers. Requires Mg(2+) as cofactor.

The enzyme catalyses 5-dehydro-4-deoxy-D-glucarate = 2-hydroxy-3-oxopropanoate + pyruvate. It catalyses the reaction 2-dehydro-3-deoxy-D-glucarate = 2-hydroxy-3-oxopropanoate + pyruvate. The protein operates within carbohydrate acid metabolism; galactarate degradation; D-glycerate from galactarate: step 2/3. Functionally, catalyzes the reversible retro-aldol cleavage of both 5-keto-4-deoxy-D-glucarate and 2-keto-3-deoxy-D-glucarate to pyruvate and tartronic semialdehyde. The protein is 5-keto-4-deoxy-D-glucarate aldolase of Escherichia coli (strain ATCC 8739 / DSM 1576 / NBRC 3972 / NCIMB 8545 / WDCM 00012 / Crooks).